We begin with the raw amino-acid sequence, 120 residues long: Spermidine export protein MdtJ (120 aa).

The next 4 helical transmembrane spans lie at 1 to 21, 31 to 51, 54 to 74, and 81 to 101; these read MFYWILLALAIIAEITGTLSM, TGFILMLAMIALSYIFLAFAV, IALGVAYALWEGIGILLITLF, and ESLSLLKIAGLTTLVIGIVLI.

It belongs to the drug/metabolite transporter (DMT) superfamily. Small multidrug resistance (SMR) (TC 2.A.7.1) family. MdtJ subfamily. In terms of assembly, forms a complex with MdtI.

The protein resides in the cell inner membrane. Catalyzes the excretion of spermidine. The chain is Spermidine export protein MdtJ from Klebsiella pneumoniae subsp. pneumoniae (strain ATCC 700721 / MGH 78578).